The sequence spans 118 residues: Ribonuclease P protein component (118 aa).

The protein belongs to the RnpA family. Consists of a catalytic RNA component (M1 or rnpB) and a protein subunit.

The enzyme catalyses Endonucleolytic cleavage of RNA, removing 5'-extranucleotides from tRNA precursor.. Functionally, RNaseP catalyzes the removal of the 5'-leader sequence from pre-tRNA to produce the mature 5'-terminus. It can also cleave other RNA substrates such as 4.5S RNA. The protein component plays an auxiliary but essential role in vivo by binding to the 5'-leader sequence and broadening the substrate specificity of the ribozyme. The chain is Ribonuclease P protein component from Petrotoga mobilis (strain DSM 10674 / SJ95).